The primary structure comprises 228 residues: HTH-type transcriptional activator FasR (228 aa).

Residues 1–39 form a disordered region; sequence MSDLAKTAQRRALRSSGSARPDEDVPAPNRRGNRLPRDE. In terms of domain architecture, HTH tetR-type spans 38-98; the sequence is DERRGQLLVV…AVLHRHVENL (61 aa). A DNA-binding region (H-T-H motif) is located at residues 61–80; that stretch reads GMDEIADRAGVSKPVLYQHF.

Homodimer.

With respect to regulation, fasR:DNA binding is regulated by long-chain acyl-CoAs (C14- to C26-CoA), which act as effector molecules that modulate the affinity of FasR for its DNA binding sequences and therefore modulate the expression of the essential fas-acpS operon. FasR activity is not affected by mycolic acid biosynthesis intermediates. Its function is as follows. Transcriptional activator that plays a central role in sensing mycobacterial long-chain fatty acids and regulating lipid biosynthesis. Activates the expression of the genes encoding the fatty acid synthase (fas) and the 4-phosphopantetheinyl transferase (acpS), whose products are involved in the fatty acid and mycolic acid biosynthesis. Specifically binds to three conserved operator sequences present in the fas-acpS promoter region. Not essential for M.tuberculosis viability, although it is required for the optimal growth in vitro and for virulence in macrophages and in a mouse model of infection. The sequence is that of HTH-type transcriptional activator FasR from Mycobacterium tuberculosis (strain ATCC 25618 / H37Rv).